We begin with the raw amino-acid sequence, 455 residues long: Golgi pH regulator (455 aa).

Helical transmembrane passes span 5 to 25 (IDSS…WLFF), 46 to 66 (VTFA…LGVL), 79 to 99 (LCVI…YFIV), 114 to 134 (CLLW…FPIL), and 150 to 170 (VGVI…VNCP). 2 N-linked (GlcNAc...) asparagine glycosylation sites follow: Asn180 and Asn243. Helical transmembrane passes span 290 to 310 (GYFF…NIVF), 343 to 363 (ISFI…LITL), 378 to 398 (VIVL…VLLI), and 425 to 445 (WFDV…YLAH).

Belongs to the Golgi pH regulator (TC 1.A.38) family. Homotrimer. Interacts with RABL3; the interaction stabilizes GPR89A.

It localises to the golgi apparatus membrane. The catalysed reaction is iodide(out) = iodide(in). It catalyses the reaction chloride(in) = chloride(out). It carries out the reaction bromide(in) = bromide(out). The enzyme catalyses fluoride(in) = fluoride(out). Its function is as follows. Voltage-gated channel that enables the transfer of monoatomic anions such as iodide, chloride, bromide and fluoride which may function in counter-ion conductance and participates in Golgi acidification. Plays a role in lymphocyte development, probably by acting as a RABL3 effector in hematopoietic cells. In Bos taurus (Bovine), this protein is Golgi pH regulator.